The primary structure comprises 82 residues: Small ribosomal subunit protein bS16 (82 aa).

It belongs to the bacterial ribosomal protein bS16 family.

This is Small ribosomal subunit protein bS16 from Shigella boydii serotype 18 (strain CDC 3083-94 / BS512).